A 308-amino-acid polypeptide reads, in one-letter code: Probable manganese-dependent inorganic pyrophosphatase (308 aa).

H9, D13, D15, D75, H97, and D149 together coordinate Mn(2+).

It belongs to the PPase class C family. The cofactor is Mn(2+).

The protein localises to the cytoplasm. It catalyses the reaction diphosphate + H2O = 2 phosphate + H(+). This chain is Probable manganese-dependent inorganic pyrophosphatase, found in Listeria innocua serovar 6a (strain ATCC BAA-680 / CLIP 11262).